Reading from the N-terminus, the 202-residue chain is uncharacterized protein (202 aa).

The 78-residue stretch at 1-78 (MKLVGSYTSP…YIELMNVAPA (78 aa)) folds into the GST N-terminal domain. Residues S9, V49, and 62–63 (DS) each bind glutathione. Residues 83 to 202 (DPLESLRVRK…SFARTEPPKA (120 aa)) form the GST C-terminal domain.

The protein belongs to the GST superfamily. HSP26 family.

In terms of biological role, glutathione (GSH) transferase homolog, that might be involved in selenium metabolism. This is an uncharacterized protein from Escherichia coli (strain K12).